The following is a 249-amino-acid chain: Uridylate kinase (249 aa).

23–26 (KISG) is an ATP binding site. The segment at 31–36 (GDQGFG) is involved in allosteric activation by GTP. Position 65 (G65) interacts with UMP. The ATP site is built by G66 and R70. UMP is bound by residues D85 and 146–153 (TGNPYFTT). The ATP site is built by T173, Y179, and D182.

This sequence belongs to the UMP kinase family. As to quaternary structure, homohexamer.

The protein localises to the cytoplasm. It carries out the reaction UMP + ATP = UDP + ADP. It participates in pyrimidine metabolism; CTP biosynthesis via de novo pathway; UDP from UMP (UMPK route): step 1/1. Its activity is regulated as follows. Allosterically activated by GTP. Inhibited by UTP. Functionally, catalyzes the reversible phosphorylation of UMP to UDP. The chain is Uridylate kinase from Jannaschia sp. (strain CCS1).